The sequence spans 36 residues: Photosystem I reaction center subunit VIII (36 aa).

A helical transmembrane segment spans residues 8–28; that stretch reads SLFVPLVGLVFPAIAMASLFL.

It belongs to the PsaI family.

The protein localises to the plastid. The protein resides in the chloroplast thylakoid membrane. May help in the organization of the PsaL subunit. The protein is Photosystem I reaction center subunit VIII of Brassica oleracea (Wild cabbage).